The sequence spans 291 residues: Nucleoid occlusion protein (291 aa).

Positions 155–174 (EALAQRLGKGQSTVANKLRL) form a DNA-binding region, H-T-H motif.

Belongs to the ParB family.

The protein localises to the cytoplasm. It is found in the nucleoid. In terms of biological role, effects nucleoid occlusion by binding relatively nonspecifically to DNA and preventing the assembly of the division machinery in the vicinity of the nucleoid, especially under conditions that disturb the cell cycle. It helps to coordinate cell division and chromosome segregation by preventing the formation of the Z ring through the nucleoid, which would cause chromosome breakage. The protein is Nucleoid occlusion protein of Bacillus pumilus (strain SAFR-032).